Consider the following 496-residue polypeptide: Probable cytosol aminopeptidase (496 aa).

Lys266 and Asp271 together coordinate Mn(2+). Residue Lys278 is part of the active site. 3 residues coordinate Mn(2+): Asp289, Asp348, and Glu350. Residue Arg352 is part of the active site.

The protein belongs to the peptidase M17 family. Mn(2+) is required as a cofactor.

It is found in the cytoplasm. It catalyses the reaction Release of an N-terminal amino acid, Xaa-|-Yaa-, in which Xaa is preferably Leu, but may be other amino acids including Pro although not Arg or Lys, and Yaa may be Pro. Amino acid amides and methyl esters are also readily hydrolyzed, but rates on arylamides are exceedingly low.. The enzyme catalyses Release of an N-terminal amino acid, preferentially leucine, but not glutamic or aspartic acids.. Its function is as follows. Presumably involved in the processing and regular turnover of intracellular proteins. Catalyzes the removal of unsubstituted N-terminal amino acids from various peptides. In Stutzerimonas stutzeri (strain A1501) (Pseudomonas stutzeri), this protein is Probable cytosol aminopeptidase.